Reading from the N-terminus, the 949-residue chain is Translation initiation factor IF-2 (949 aa).

Disordered stretches follow at residues 50–206 and 220–359; these read FTEK…GAAR and QNAE…TERK. Composition is skewed to basic and acidic residues over residues 52 to 84 and 104 to 143; these read EKPKTETKPKIKAVDETPKPKLEAVKEEVKVEK and FKAEREARAKEQAARQKRNAQESTERRQDNRYQQKNDQGS. Composition is skewed to polar residues over residues 144-154 and 164-180; these read KNRNFNKSQGQ and GSQQNNRQDSRIASNKP. Low complexity predominate over residues 187-206; it reads NAANRNQNNSQQERQVGAAR. Residues 224–275 show a composition bias toward basic and acidic residues; the sequence is YMRHKETQLREQEEARRLAERAKEEARLAAQKAAEEKAKEAEKAAKTERFEP. Over residues 319–336 the composition is skewed to low complexity; the sequence is KSWNNQNQVRNQRNSNWN. Residues 450–619 form the tr-type G domain; it reads ERAPVVTIMG…LLVAEVEELK (170 aa). The G1 stretch occupies residues 459–466; that stretch reads GHVDHGKT. 459–466 lines the GTP pocket; sequence GHVDHGKT. A G2 region spans residues 484-488; it reads GITQH. A G3 region spans residues 505-508; sequence DTPG. GTP-binding positions include 505 to 509 and 559 to 562; these read DTPGH and NKID. The tract at residues 559–562 is G4; sequence NKID. Positions 595–597 are G5; that stretch reads SAK.

The protein belongs to the TRAFAC class translation factor GTPase superfamily. Classic translation factor GTPase family. IF-2 subfamily.

Its subcellular location is the cytoplasm. Functionally, one of the essential components for the initiation of protein synthesis. Protects formylmethionyl-tRNA from spontaneous hydrolysis and promotes its binding to the 30S ribosomal subunits. Also involved in the hydrolysis of GTP during the formation of the 70S ribosomal complex. The sequence is that of Translation initiation factor IF-2 from Streptococcus uberis (strain ATCC BAA-854 / 0140J).